A 124-amino-acid polypeptide reads, in one-letter code: Small ribosomal subunit protein uS10z/uS10x (124 aa).

It belongs to the universal ribosomal protein uS10 family.

In Arabidopsis thaliana (Mouse-ear cress), this protein is Small ribosomal subunit protein uS10z/uS10x (RPS20A).